The following is a 61-amino-acid chain: Large ribosomal subunit protein uL29 (61 aa).

It belongs to the universal ribosomal protein uL29 family.

The polypeptide is Large ribosomal subunit protein uL29 (Stenotrophomonas maltophilia (strain R551-3)).